Here is a 308-residue protein sequence, read N- to C-terminus: Ribosomal RNA small subunit methyltransferase H (308 aa).

S-adenosyl-L-methionine contacts are provided by residues 36 to 38 (GGH), Asp-55, Phe-86, Asp-103, and Gln-110.

The protein belongs to the methyltransferase superfamily. RsmH family.

It is found in the cytoplasm. It carries out the reaction cytidine(1402) in 16S rRNA + S-adenosyl-L-methionine = N(4)-methylcytidine(1402) in 16S rRNA + S-adenosyl-L-homocysteine + H(+). Its function is as follows. Specifically methylates the N4 position of cytidine in position 1402 (C1402) of 16S rRNA. This chain is Ribosomal RNA small subunit methyltransferase H, found in Helicobacter pylori (strain B38).